Here is a 164-residue protein sequence, read N- to C-terminus: Phosphopantetheine adenylyltransferase (164 aa).

Substrate is bound at residue S10. Residues 10 to 11 (SF) and H18 each bind ATP. Positions 42, 74, and 88 each coordinate substrate. ATP contacts are provided by residues 89-91 (GLR), E99, and 124-130 (YFFVSAR).

It belongs to the bacterial CoaD family. In terms of assembly, homohexamer. It depends on Mg(2+) as a cofactor.

It is found in the cytoplasm. It carries out the reaction (R)-4'-phosphopantetheine + ATP + H(+) = 3'-dephospho-CoA + diphosphate. The protein operates within cofactor biosynthesis; coenzyme A biosynthesis; CoA from (R)-pantothenate: step 4/5. Reversibly transfers an adenylyl group from ATP to 4'-phosphopantetheine, yielding dephospho-CoA (dPCoA) and pyrophosphate. The protein is Phosphopantetheine adenylyltransferase of Anaeromyxobacter dehalogenans (strain 2CP-C).